Here is a 309-residue protein sequence, read N- to C-terminus: MSNDSSGSEWELYRYTPSKGAAIALTVLFIVTTLIYSLQVVWDARKASKPEVDNPFDTPVDKCESITAISLGENYKKLTVRSTFSAFIPLFFGCIMEIVGYIARAVSSSNTKEIAPYVIQAVLLLIAPALYAATIYMLFGRLLHVMRCESLMIVSSRFGTSFFVFGDVVSFCLQAAGGGLMATVNGRTTGSNLITAGLVIQIVFFGVFIINEFRFSYSVARVCPFYRHISKKWWFLNLTLMLSSILIMVRSIVRLVEFVEGYDGFIISHEYFIYVFDAVPMLLAAIVFIVGSFFGNIFTTITECQSLKP.

7 helical membrane-spanning segments follow: residues 22 to 42 (AIAL…QVVW), 83 to 103 (TFSA…GYIA), 119 to 139 (IQAV…YMLF), 162 to 182 (FFVF…GLMA), 193 to 213 (LITA…INEF), 233 to 253 (WWFL…RSIV), and 278 to 298 (AVPM…GNIF).

Belongs to the lipid-translocating exporter (LTE) (TC 9.A.26.1) family.

It is found in the membrane. In terms of biological role, confers resistance to molasses (to a particular toxic element present in some molasses). The chain is Protein RTM1 (RTM1) from Saccharomyces cerevisiae (Baker's yeast).